A 394-amino-acid polypeptide reads, in one-letter code: Elongation factor Tu (394 aa).

The 195-residue stretch at 10–204 folds into the tr-type G domain; the sequence is KPHINVGTIG…AMDNYIPIPE (195 aa). The G1 stretch occupies residues 19-26; the sequence is GHVDHGKT. 19–26 provides a ligand contact to GTP; that stretch reads GHVDHGKT. Position 26 (threonine 26) interacts with Mg(2+). The G2 stretch occupies residues 60–64; the sequence is GITIN. Residues 81 to 84 form a G3 region; it reads DCPG. GTP contacts are provided by residues 81 to 85 and 136 to 139; these read DCPGH and NKVD. The interval 136–139 is G4; sequence NKVD. Positions 174-176 are G5; that stretch reads SAL.

Belongs to the TRAFAC class translation factor GTPase superfamily. Classic translation factor GTPase family. EF-Tu/EF-1A subfamily. In terms of assembly, monomer.

It is found in the cytoplasm. The catalysed reaction is GTP + H2O = GDP + phosphate + H(+). In terms of biological role, GTP hydrolase that promotes the GTP-dependent binding of aminoacyl-tRNA to the A-site of ribosomes during protein biosynthesis. In Methylacidiphilum infernorum (isolate V4) (Methylokorus infernorum (strain V4)), this protein is Elongation factor Tu.